Here is a 276-residue protein sequence, read N- to C-terminus: NAC domain-containing protein 67 (276 aa).

Positions 17 to 170 (LPPGFRFHPT…DWVLCRLYNK (154 aa)) constitute an NAC domain.

Expressed in leaf blades.

Its subcellular location is the nucleus. In terms of biological role, probable transcription factor involved in stress response. The protein is NAC domain-containing protein 67 of Oryza sativa subsp. japonica (Rice).